The following is a 246-amino-acid chain: Aquaporin AqpM (246 aa).

Residues 1–11 (MVSLTKRCIAE) lie on the Cytoplasmic side of the membrane. A helical transmembrane segment spans residues 12–32 (FIGTFILVFFGAGSAAVTLMI). Topologically, residues 33–55 (ASGGTSPNPFNIGIGLLGGLGDW) are extracellular. The chain crosses the membrane as a helical span at residues 56-76 (VAIGLAFGFAIAASIYALGNI). Residues 77–103 (SGCHINPAVTIGLWSVKKFPGREVVPY) are Cytoplasmic-facing. The short motif at 82-84 (NPA) is the NPA 1 element. The chain crosses the membrane as a helical span at residues 104-124 (IIAQLLGAAFGSFIFLQCAGI). Topologically, residues 125-145 (GAATVGGLGATAPFPGISYWQ) are extracellular. The chain crosses the membrane as a helical span at residues 146–166 (AMLAEVVGTFLLMITIMGIAV). The Cytoplasmic segment spans residues 167 to 172 (DERAPK). Residues 173-193 (GFAGIIIGLTVAGIITTLGNI) traverse the membrane as a helical segment. Over 194–217 (SGSSLNPARTFGPYLNDMIFAGTN) the chain is Extracellular. The NPA 2 motif lies at 199-201 (NPA). A helical transmembrane segment spans residues 218-238 (LWNYYPIYVIGPIVGAVLAAL). At 239–246 (TYQYLTSE) the chain is on the cytoplasmic side.

The protein belongs to the MIP/aquaporin (TC 1.A.8) family. In terms of assembly, homotetramer.

The protein localises to the cell membrane. Channel that permits osmotically driven movement of water in both directions. It mediates rapid entry or exit of water in response to abrupt changes in osmolarity. Also exhibits a transient but reproducible increase in the initial glycerol flux. The sequence is that of Aquaporin AqpM (aqpM) from Methanothermobacter marburgensis (strain ATCC BAA-927 / DSM 2133 / JCM 14651 / NBRC 100331 / OCM 82 / Marburg) (Methanobacterium thermoautotrophicum).